Reading from the N-terminus, the 664-residue chain is Bifunctional polymyxin resistance protein ArnA (664 aa).

A formyltransferase ArnAFT region spans residues 1–308; it reads MSTKAVVFAY…EFGLVAGSQM (308 aa). The active-site Proton donor; for formyltransferase activity is His106. (6R)-10-formyltetrahydrofolate-binding positions include Arg116 and 138–142; that span reads VKRAD. The dehydrogenase ArnADH stretch occupies residues 318–664; sequence RRTRVLILGV…EAMAEKADQC (347 aa). NAD(+) contacts are provided by residues Asp351 and 372-373; that span reads DI. UDP-alpha-D-glucuronate is bound by residues Ala397, Tyr402, and 436-437; that span reads TS. The active-site Proton acceptor; for decarboxylase activity is Glu438. UDP-alpha-D-glucuronate is bound by residues Arg464, Asn495, 529 to 538, and Tyr616; that span reads RLVDGGAQKR. Arg622 serves as the catalytic Proton donor; for decarboxylase activity.

This sequence in the N-terminal section; belongs to the Fmt family. UDP-L-Ara4N formyltransferase subfamily. It in the C-terminal section; belongs to the NAD(P)-dependent epimerase/dehydratase family. UDP-glucuronic acid decarboxylase subfamily. In terms of assembly, homohexamer, formed by a dimer of trimers.

The catalysed reaction is UDP-alpha-D-glucuronate + NAD(+) = UDP-beta-L-threo-pentopyranos-4-ulose + CO2 + NADH. It carries out the reaction UDP-4-amino-4-deoxy-beta-L-arabinose + (6R)-10-formyltetrahydrofolate = UDP-4-deoxy-4-formamido-beta-L-arabinose + (6S)-5,6,7,8-tetrahydrofolate + H(+). It participates in nucleotide-sugar biosynthesis; UDP-4-deoxy-4-formamido-beta-L-arabinose biosynthesis; UDP-4-deoxy-4-formamido-beta-L-arabinose from UDP-alpha-D-glucuronate: step 1/3. Its pathway is nucleotide-sugar biosynthesis; UDP-4-deoxy-4-formamido-beta-L-arabinose biosynthesis; UDP-4-deoxy-4-formamido-beta-L-arabinose from UDP-alpha-D-glucuronate: step 3/3. The protein operates within bacterial outer membrane biogenesis; lipopolysaccharide biosynthesis. In terms of biological role, bifunctional enzyme that catalyzes the oxidative decarboxylation of UDP-glucuronic acid (UDP-GlcUA) to UDP-4-keto-arabinose (UDP-Ara4O) and the addition of a formyl group to UDP-4-amino-4-deoxy-L-arabinose (UDP-L-Ara4N) to form UDP-L-4-formamido-arabinose (UDP-L-Ara4FN). The modified arabinose is attached to lipid A and is required for resistance to polymyxin and cationic antimicrobial peptides. The protein is Bifunctional polymyxin resistance protein ArnA of Pseudomonas syringae pv. syringae (strain B728a).